Here is a 919-residue protein sequence, read N- to C-terminus: DNA double-strand break repair Rad50 ATPase (919 aa).

Residues 33-39 (NGAGKST) and Gln-143 each bind ATP. Coiled-coil stretches lie at residues 208 to 268 (MTLR…MLVN), 315 to 379 (HEVA…RRYT), and 414 to 458 (ESVL…LEES). Positions 417–516 (LERLDAVIND…EASRLQDKRR (100 aa)) constitute a Zinc-hook domain. Residues Cys-464 and Cys-467 each contribute to the Zn(2+) site. 3 coiled-coil regions span residues 486 to 515 (EAERLRKAAKEKAAEAEKARAEASRLQDKR), 541 to 595 (EDLA…LQRL), and 635 to 749 (AYRS…RKAS).

This sequence belongs to the SMC family. RAD50 subfamily. Homodimer. Forms a heterotetramer composed of two Mre11 subunits and two Rad50 subunits. Zn(2+) serves as cofactor.

In terms of biological role, part of the Rad50/Mre11 complex, which is involved in the early steps of DNA double-strand break (DSB) repair. The complex may facilitate opening of the processed DNA ends to aid in the recruitment of HerA and NurA. Rad50 controls the balance between DNA end bridging and DNA resection via ATP-dependent structural rearrangements of the Rad50/Mre11 complex. The polypeptide is DNA double-strand break repair Rad50 ATPase (Aeropyrum pernix (strain ATCC 700893 / DSM 11879 / JCM 9820 / NBRC 100138 / K1)).